A 333-amino-acid chain; its full sequence is MDKTVLDANLDPLKGKTIGVIGYGNQGRVQATIMRENGLNVIVGNVKDKYYELAKKEGFEVYEIDEAVRRSDVALLLIPDEVMKEVYEKKIAPVLQGKKEFVLDFASGYNVAFGLIRPPKSVDTIMVAPRMVGEGIMDLHKQGKGYPVLLGVKQDASGKAWDYAKAIAKGIGAIPGGIAVISSFEEEALLDLMSEHTWVPILFGAIKACYDIAVKEYGVSPEAALLEFYASGELAEIARLIAEEGIFNQMVHHSTTSQYGTLTRMFKYYDVVRRIVENEAKYIWDGSFAKEWSLEQQAGYPVFYRLWELATQSEMAKAEKELYKLLGRKVKND.

The region spanning 1–182 (MDKTVLDANL…AIPGGIAVIS (182 aa)) is the KARI N-terminal Rossmann domain. The KARI C-terminal knotted domain maps to 183–329 (SFEEEALLDL…KELYKLLGRK (147 aa)).

The protein belongs to the ketol-acid reductoisomerase family.

It carries out the reaction (2R)-2,3-dihydroxy-3-methylbutanoate + NADP(+) = (2S)-2-acetolactate + NADPH + H(+). It catalyses the reaction (2R,3R)-2,3-dihydroxy-3-methylpentanoate + NADP(+) = (S)-2-ethyl-2-hydroxy-3-oxobutanoate + NADPH + H(+). The protein operates within amino-acid biosynthesis; L-isoleucine biosynthesis; L-isoleucine from 2-oxobutanoate: step 2/4. It participates in amino-acid biosynthesis; L-valine biosynthesis; L-valine from pyruvate: step 2/4. This is Putative ketol-acid reductoisomerase 2 (ilvC2) from Saccharolobus solfataricus (strain ATCC 35092 / DSM 1617 / JCM 11322 / P2) (Sulfolobus solfataricus).